Consider the following 628-residue polypeptide: Netrin-4 (628 aa).

A signal peptide spans 1–19; the sequence is MGSCARLLLLWGCSAVAAG. Residues 30–261 form the Laminin N-terminal domain; sequence CEKACNPRMG…AVYDFIVKGS (232 aa). Residues N56 and N163 are each glycosylated (N-linked (GlcNAc...) asparagine). 12 cysteine pairs are disulfide-bonded: C262-C271, C264-C293, C295-C304, C307-C329, C332-C341, C334-C359, C362-C371, C374-C392, C395-C413, C397-C420, C422-C431, and C434-C446. 3 Laminin EGF-like domains span residues 262–331, 332–394, and 395–448; these read CFCN…ECRT, CKCN…ACKA, and CSCH…GCRP. An N-linked (GlcNAc...) asparagine glycan is attached at N353. An N-linked (GlcNAc...) asparagine glycan is attached at N483. 2 disulfide bridges follow: C506–C576 and C520–C627. Residues 506 to 627 enclose the NTR domain; the sequence is CECKEQVLGN…RVMHILKRDC (122 aa).

In terms of assembly, may form a homodimer. Expressed in kidney, liver, heart, ovary, testis, retina, brain, olfactory bulb, and widely expressed in embryo.

Its subcellular location is the secreted. It is found in the extracellular space. The protein resides in the extracellular matrix. It localises to the basement membrane. In terms of biological role, may play an important role in neural, kidney and vascular development. Promotes neurite elongation from olfactory bulb explants. The chain is Netrin-4 (Ntn4) from Mus musculus (Mouse).